Here is a 156-residue protein sequence, read N- to C-terminus: Cyanate hydratase (156 aa).

Residues Arg-96, Glu-99, and Ser-122 contribute to the active site.

It belongs to the cyanase family.

The catalysed reaction is cyanate + hydrogencarbonate + 3 H(+) = NH4(+) + 2 CO2. Catalyzes the reaction of cyanate with bicarbonate to produce ammonia and carbon dioxide. This is Cyanate hydratase from Pseudomonas fluorescens (strain ATCC BAA-477 / NRRL B-23932 / Pf-5).